The chain runs to 405 residues: NADH-quinone oxidoreductase subunit D (405 aa).

This sequence belongs to the complex I 49 kDa subunit family. As to quaternary structure, NDH-1 is composed of 14 different subunits. Subunits NuoB, C, D, E, F, and G constitute the peripheral sector of the complex.

The protein resides in the cell inner membrane. It catalyses the reaction a quinone + NADH + 5 H(+)(in) = a quinol + NAD(+) + 4 H(+)(out). In terms of biological role, NDH-1 shuttles electrons from NADH, via FMN and iron-sulfur (Fe-S) centers, to quinones in the respiratory chain. The immediate electron acceptor for the enzyme in this species is believed to be ubiquinone. Couples the redox reaction to proton translocation (for every two electrons transferred, four hydrogen ions are translocated across the cytoplasmic membrane), and thus conserves the redox energy in a proton gradient. The chain is NADH-quinone oxidoreductase subunit D from Afipia carboxidovorans (strain ATCC 49405 / DSM 1227 / KCTC 32145 / OM5) (Oligotropha carboxidovorans).